The chain runs to 122 residues: Probable DNA-directed RNA polymerase II subunit RPB11 (122 aa).

The protein belongs to the archaeal Rpo11/eukaryotic RPB11/RPC19 RNA polymerase subunit family. As to quaternary structure, component of the RNA polymerase II (Pol II) complex consisting of 12 subunits.

The protein localises to the nucleus. Functionally, DNA-dependent RNA polymerase catalyzes the transcription of DNA into RNA using the four ribonucleoside triphosphates as substrates. Component of RNA polymerase II which synthesizes mRNA precursors and many functional non-coding RNAs. Pol II is the central component of the basal RNA polymerase II transcription machinery. It is composed of mobile elements that move relative to each other. RPB11 is part of the core element with the central large cleft. This is Probable DNA-directed RNA polymerase II subunit RPB11 (rpb-11) from Caenorhabditis briggsae.